We begin with the raw amino-acid sequence, 553 residues long: Putative transport protein Ent638_0015 (553 aa).

Helical transmembrane passes span 4–24 (IALT…IGNI), 28–48 (GVGL…HFAE), 65–85 (FGLI…FFAS), 95–115 (LFAL…HKLF), and 158–178 (MSYA…MWLV). 2 consecutive RCK C-terminal domains span residues 191–276 (KKHE…VIGQ) and 279–361 (ETSL…MVGN). 6 consecutive transmembrane segments (helical) span residues 371-391 (MLPV…PLYV), 403-425 (AGGP…LYWF), 439-459 (IVLF…DTLA), 464-484 (ISWI…IGIL), 493-513 (YLTL…LAFA), and 533-553 (LVMF…WGMG).

The protein belongs to the AAE transporter (TC 2.A.81) family. YidE subfamily.

The protein resides in the cell membrane. The protein is Putative transport protein Ent638_0015 of Enterobacter sp. (strain 638).